Consider the following 145-residue polypeptide: Large ribosomal subunit protein uL15 (145 aa).

2 stretches are compositionally biased toward basic residues: residues Met-1–His-13 and Lys-19–Gly-29. The interval Met-1 to Ala-33 is disordered.

Belongs to the universal ribosomal protein uL15 family. Part of the 50S ribosomal subunit.

In terms of biological role, binds to the 23S rRNA. This chain is Large ribosomal subunit protein uL15, found in Thermoplasma volcanium (strain ATCC 51530 / DSM 4299 / JCM 9571 / NBRC 15438 / GSS1).